The chain runs to 148 residues: MDIRLDSRRAIQAGPLVTTGRIAGAALRMARPFLGIARRLQFKAKAFELALRSVALQLMNDAMADADEAMEETEEDADALGGPRQEVRAVSDGTIVTEREMTCPQNRYCHECSWTGAAAGQNVAAKGAGAAVPGPNRRTGSGERRGYG.

Over residues 66-78 (ADEAMEETEEDAD) the composition is skewed to acidic residues. Disordered stretches follow at residues 66-93 (ADEA…VSDG) and 124-148 (AAKG…RGYG). Residues 124–136 (AAKGAGAAVPGPN) show a composition bias toward low complexity.

Its function is as follows. Involved in efficiency of soybean nodulation and in nodulation delay. The polypeptide is Nodulation protein NolJ (nolJ) (Rhizobium fredii (Sinorhizobium fredii)).